A 711-amino-acid polypeptide reads, in one-letter code: Choline transporter-like protein 2 (711 aa).

The Cytoplasmic portion of the chain corresponds to 1 to 33 (MGDERPHYYGKHGTPQKYDPTFKGPIYNRGCTD). A Phosphothreonine modification is found at Thr14. The helical transmembrane segment at 34 to 54 (VICCVFLLVAIVGYVAVGIIA) threads the bilayer. At 55–232 (WTHGDPRKVI…RIFEDYTVSW (178 aa)) the chain is on the extracellular side. N-linked (GlcNAc...) asparagine glycosylation is found at Asn187 and Asn200. A helical membrane pass occupies residues 233–253 (YWIIIGLVIAMAMSLLFIILL). The Cytoplasmic segment spans residues 254–256 (RFL). Residues 257–277 (AGIMVWVMIIMVILVLGYGIF) form a helical membrane-spanning segment. The Extracellular segment spans residues 278–315 (HCYMEYSRLRGEAGSDVSLVDLGFQTDFRVYLHLRQTW). A helical transmembrane segment spans residues 316 to 336 (LAFMIILSILEVIIILLLIFL). The Cytoplasmic segment spans residues 337-364 (RKRILIAIALIKEASRAVGYVMCTMLYP). A helical transmembrane segment spans residues 365–385 (LVTFFLLCLCIAYWASTAVFL). At 386-440 (STSNEAVYKIFDDGLCPFTAKTCNPETFPSSNESRQCPNARCQFAFYGGESGYHR) the chain is on the extracellular side. Asn417 carries an N-linked (GlcNAc...) asparagine glycan. A helical transmembrane segment spans residues 441–461 (ALLGLQIFNAFMFFWLANFVL). Residues 462-504 (ALGQVTLAGAFASYYWALRKPDDLPAFPLFSAFGRALRYHTGS) are Cytoplasmic-facing. Residues 505-525 (LAFGALILAIVQIIRVILEYL) traverse the membrane as a helical segment. Residues 526-563 (DQRLKAAENKFAKCLMTCLKCCFWCLEKFIKFLNRNAY) lie on the Extracellular side of the membrane. A helical membrane pass occupies residues 564-584 (IMIAIYGTNFCTSARNAFFLL). Topologically, residues 585 to 599 (MRNIIRVAVLDKVTD) are cytoplasmic. The chain crosses the membrane as a helical span at residues 600–620 (FLFLLGKLLIVGSVGILAFFF). At 621–638 (FTHRIRIVQDTAPPLNYY) the chain is on the extracellular side. A helical transmembrane segment spans residues 639–659 (WVPILTVIVGSYLIAHGFFSV). Residues 660–711 (YGMCVDTLFLCFCEDLERNDGSQERPYFMSPELRDILLKGSAEEGKRAEAEE) lie on the Cytoplasmic side of the membrane.

This sequence belongs to the CTL (choline transporter-like) family. As to quaternary structure, interacts with COCH. In terms of processing, N-glycosylated.

Its subcellular location is the cell membrane. It is found in the mitochondrion outer membrane. It catalyses the reaction choline(out) + n H(+)(in) = choline(in) + n H(+)(out). It carries out the reaction ethanolamine(out) + n H(+)(in) = ethanolamine(in) + n H(+)(out). In terms of biological role, choline/H+ antiporter, mainly in mitochodria. Also acts as a low-affinity ethanolamine/H+ antiporter, regulating the supply of extracellular ethanolamine (Etn) for the CDP-Etn pathway, redistribute intracellular Etn and balance the CDP-Cho and CDP-Etn arms of the Kennedy pathway. This Pongo abelii (Sumatran orangutan) protein is Choline transporter-like protein 2 (SLC44A2).